Here is a 238-residue protein sequence, read N- to C-terminus: Ribonuclease PH (238 aa).

Phosphate is bound by residues arginine 86 and 124–126; that span reads GTR.

It belongs to the RNase PH family. Homohexameric ring arranged as a trimer of dimers.

It carries out the reaction tRNA(n+1) + phosphate = tRNA(n) + a ribonucleoside 5'-diphosphate. Phosphorolytic 3'-5' exoribonuclease that plays an important role in tRNA 3'-end maturation. Removes nucleotide residues following the 3'-CCA terminus of tRNAs; can also add nucleotides to the ends of RNA molecules by using nucleoside diphosphates as substrates, but this may not be physiologically important. Probably plays a role in initiation of 16S rRNA degradation (leading to ribosome degradation) during starvation. In Shigella dysenteriae serotype 1 (strain Sd197), this protein is Ribonuclease PH.